Reading from the N-terminus, the 506-residue chain is Cytochrome P450 monooxygenase atr2 (506 aa).

Residues 18 to 38 form a helical membrane-spanning segment; it reads VFAGLVLASLLTTTYCIWNIF. C451 is a heme binding site.

This sequence belongs to the cytochrome P450 family. Heme serves as cofactor.

The protein localises to the membrane. It carries out the reaction 4-O-demethylbarbatate + reduced [NADPH--hemoprotein reductase] + O2 = proatranorin II + oxidized [NADPH--hemoprotein reductase] + H2O + H(+). The catalysed reaction is proatranorin II + reduced [NADPH--hemoprotein reductase] + O2 = proatranorin III + oxidized [NADPH--hemoprotein reductase] + 2 H2O + H(+). It catalyses the reaction proatranorin I + reduced [NADPH--hemoprotein reductase] + O2 = proatranorin IV + oxidized [NADPH--hemoprotein reductase] + H2O + H(+). The enzyme catalyses proatranorin IV + reduced [NADPH--hemoprotein reductase] + O2 = atranorin + oxidized [NADPH--hemoprotein reductase] + 2 H2O + H(+). It functions in the pathway secondary metabolite biosynthesis; terpenoid biosynthesis. Cytochrome P450 monooxygenase; part of the gene cluster that mediates the biosynthesis of atranorin, a depside of polyketide origin that accumulates in the cortical or medullary layers of lichen thalli. Atr2 performs the oxidation at the C-9 position of 4-O-demethylbarbatic acid to yield proatranorin III via proatranorin II. Atr2 is also able to oxidize the atr3 product proatranorin I to produce the final compound atranorin. The first step in the pathway is performed by the non-reducing polyketide synthase atr1 that produces 4-O-demethylbarbatic acid composed of two 3-methylorsellinic acid (3MOA) moieties. The pathway continues with the actions of the cytochrome P450 monooygenase atr2 that catalizes the oxidation of c-9 and the O-methyltransferase atr3 that performs the methylation of the carboxyl group to yield atranorin, via the proatranorin II and III intermediates if atr2 acts first, or the proatranorin I intermediate if atr3 acts first. The polypeptide is Cytochrome P450 monooxygenase atr2 (Stereocaulon alpinum (Alpine snow lichen)).